Reading from the N-terminus, the 545-residue chain is ATP synthase subunit alpha (545 aa).

Residue Gly172 to Thr179 coordinates ATP.

Belongs to the ATPase alpha/beta chains family. F-type ATPases have 2 components, CF(1) - the catalytic core - and CF(0) - the membrane proton channel. CF(1) has five subunits: alpha(3), beta(3), gamma(1), delta(1), epsilon(1). CF(0) has three main subunits: a(1), b(2) and c(9-12). The alpha and beta chains form an alternating ring which encloses part of the gamma chain. CF(1) is attached to CF(0) by a central stalk formed by the gamma and epsilon chains, while a peripheral stalk is formed by the delta and b chains.

The protein resides in the cell membrane. The enzyme catalyses ATP + H2O + 4 H(+)(in) = ADP + phosphate + 5 H(+)(out). In terms of biological role, produces ATP from ADP in the presence of a proton gradient across the membrane. The alpha chain is a regulatory subunit. The protein is ATP synthase subunit alpha of Nocardia farcinica (strain IFM 10152).